A 434-amino-acid polypeptide reads, in one-letter code: Maltoporin (434 aa).

Positions 1 to 25 are cleaved as a signal peptide; that stretch reads MKMKAKWLPIAAAVTAALASQAAFA.

This sequence belongs to the porin LamB (TC 1.B.3) family. In terms of assembly, homotrimer formed of three 18-stranded antiparallel beta-barrels, containing three independent channels.

The protein localises to the cell outer membrane. The enzyme catalyses beta-maltose(in) = beta-maltose(out). In terms of biological role, involved in the transport of maltose and maltodextrins. In Aeromonas hydrophila, this protein is Maltoporin.